A 449-amino-acid polypeptide reads, in one-letter code: Glutamyl-tRNA reductase (449 aa).

Substrate is bound by residues 48–51 (TCNR), Ser-99, 104–106 (EDQ), and Gln-110. Catalysis depends on Cys-49, which acts as the Nucleophile. NADP(+) is bound at residue 179–184 (GAGEIG).

This sequence belongs to the glutamyl-tRNA reductase family. As to quaternary structure, homodimer.

It carries out the reaction (S)-4-amino-5-oxopentanoate + tRNA(Glu) + NADP(+) = L-glutamyl-tRNA(Glu) + NADPH + H(+). It functions in the pathway porphyrin-containing compound metabolism; protoporphyrin-IX biosynthesis; 5-aminolevulinate from L-glutamyl-tRNA(Glu): step 1/2. In terms of biological role, catalyzes the NADPH-dependent reduction of glutamyl-tRNA(Glu) to glutamate 1-semialdehyde (GSA). The chain is Glutamyl-tRNA reductase from Methanosarcina barkeri (strain Fusaro / DSM 804).